Here is a 711-residue protein sequence, read N- to C-terminus: MAERESGGLGGGAASPPAASPFLGLHIASPPNFRLTHDISLEEFEDEDLSEITDECGISLQCKDTLSLRPPRAGLLSAGGGGAGSRLQAEMLQMDLIDATGDTPGAEDDEEDDDEERAARRPGAGPPKAESGQEPASRGQGQSQGQSQGPGSGDTYRPKRPTTLNLFPQVPRSQDTLNNNSLGKKHSWQDRVSRSSSPLKTGEQTPPHEHICLSDELPPQSGPAPTTDRGTSTDSPCRRSTATQMAPPGGPPAAPPGGRGHSHRDRIHYQADVRLEATEEIYLTPVQRPPDAAEPTSAFLPPTESRMSVSSDPDPAAYPSTAGRPHPSISEEEEGFDCLSSPERAEPPGGGWRGSLGEPPPPPRASLSSDTSALSYDSVKYTLVVDEHAQLELVSLRPCFGDYSDESDSATVYDNCASVSSPYESAIGEEYEEAPRPQPPACLSEDSTPDEPDVHFSKKFLNVFMSGRSRSSSAESFGLFSCIINGEEQEQTHRAIFRFVPRHEDELELEVDDPLLVELQAEDYWYEAYNMRTGARGVFPAYYAIEVTKEPEHMAALAKNSDWVDQFRVKFLGSVQVPYHKGNDVLCAAMQKIATTRRLTVHFNPPSSCVLEISVRGVKIGVKADDSQEAKGNKCSHFFQLKNISFCGYHPKNNKYFGFITKHPADHRFACHVFVSEDSTKALAESVGRAFQQFYKQFVEYTCPTEDIYLE.

The tract at residues 1–27 (MAERESGGLGGGAASPPAASPFLGLHI) is disordered. Positions 14–25 (ASPPAASPFLGL) are enriched in low complexity. Residues Ser-15, Ser-29, and Ser-40 each carry the phosphoserine modification. The interval 78–371 (AGGGGAGSRL…PPRASLSSDT (294 aa)) is disordered. Residue Thr-103 is modified to Phosphothreonine; by MAPK8, MAPK9 and MAPK10. Over residues 105 to 116 (GAEDDEEDDDEE) the composition is skewed to acidic residues. The interval 127-285 (PKAESGQEPA…EATEEIYLTP (159 aa)) is JNK-binding domain (JBD). The segment covering 139-149 (GQGQSQGQSQG) has biased composition (low complexity). Residue Ser-152 is modified to Phosphoserine. The interval 157 to 176 (RPKRPTTLNLFPQVPRSQDT) is minimal inhibitory domain (MID). Positions 162–182 (TTLNLFPQVPRSQDTLNNNSL) are enriched in polar residues. Ser-181, Ser-187, Ser-193, Ser-195, and Ser-196 each carry phosphoserine. Polar residues predominate over residues 194-204 (RSSSPLKTGEQ). Phosphothreonine; by MAPK8, MAPK9 and MAPK10 is present on Thr-205. Ser-214 carries the phosphoserine modification. The span at 228-244 (DRGTSTDSPCRRSTATQ) shows a compositional bias: polar residues. A compositionally biased stretch (basic and acidic residues) spans 267 to 277 (IHYQADVRLEA). Residues 283–471 (LTPVQRPPDA…NVFMSGRSRS (189 aa)) form an interaction with MAP3K7 region. Phosphoserine occurs at positions 311, 328, 330, 340, 355, 366, 369, 407, and 409. 2 consecutive short sequence motifs (D-box) follow at residues 353 to 360 (RGSLGEPP) and 364 to 372 (RASLSSDTS). Phosphothreonine is present on Thr-411. Residues 429 to 451 (EEYEEAPRPQPPACLSEDSTPDE) form a disordered region. Ser-444 and Ser-447 each carry phosphoserine. The residue at position 448 (Thr-448) is a Phosphothreonine. 4 positions are modified to phosphoserine: Ser-469, Ser-471, Ser-472, and Ser-473. Positions 471–660 (SSSAESFGLF…PKNNKYFGFI (190 aa)) are interaction with VRK2. The 62-residue stretch at 488–549 (EQEQTHRAIF…PAYYAIEVTK (62 aa)) folds into the SH3 domain. The 140-residue stretch at 561 to 700 (SDWVDQFRVK…FQQFYKQFVE (140 aa)) folds into the PID domain.

The protein belongs to the JIP scaffold family. In terms of assembly, forms homo- or heterooligomeric complexes. Binds specific components of the JNK signaling pathway namely, MAPK8/JNK1, MAPK9/JNK2, MAPK10/JNK3, MAP2K7/MKK7, MAP3K11/MLK3 and DLK1. Also binds the proline-rich domain-containing splice variant of apolipoprotein E receptor 2 (ApoER2). Interacts, via the PID domain, with ARHGEF28. Binds the cytoplasmic tails of LRP1 and LRP2 (Megalin). Binds the TPR motif-containing C-terminal of KNS2, then the pre-assembled MAPK8IP1 scaffolding complexes are transported as a cargo of kinesin, to the required subcellular location. Interacts with the cytoplasmic domain of APP. Interacts with DCLK2. Interacts with MAP3K7/TAK1. Interacts with isoform 1 and isoform 2 of VRK2. Found in a complex with SH3RF1, RAC1, MAP3K11/MLK3, MAP2K7/MKK7 and MAPK8/JNK1. Found in a complex with SH3RF1, RAC2, MAP3K7/TAK1, MAP2K7/MKK7, MAPK8/JNK1 and MAPK9/JNK2. Interacts with SH3RF2. Phosphorylated by MAPK8, MAPK9 and MAPK10. Phosphorylation on Thr-103 is also necessary for the dissociation and activation of MAP3K12. Phosphorylated by isoform 1 and isoform 2 of VRK2. Hyperphosphorylated during mitosis following activation of stress-activated and MAP kinases. In terms of processing, ubiquitinated. Two preliminary events are required to prime for ubiquitination; phosphorylation and an increased in intracellular calcium concentration. Then, the calcium influx initiates ubiquitination and degradation by the ubiquitin-proteasome pathway. As to expression, highly expressed in brain. Expressed in neurons, localizing to neurite tips in differentiating cells. Also expressed in the pancreas, testis and prostate. Low levels in heart, ovary and small intestine. Decreased levels in pancreatic beta cells sensitize cells to IL-1-beta-induced apoptosis.

It is found in the cytoplasm. It localises to the perinuclear region. The protein localises to the nucleus. The protein resides in the endoplasmic reticulum membrane. Its subcellular location is the mitochondrion membrane. In terms of biological role, the JNK-interacting protein (JIP) group of scaffold proteins selectively mediates JNK signaling by aggregating specific components of the MAPK cascade to form a functional JNK signaling module. Required for JNK activation in response to excitotoxic stress. Cytoplasmic MAPK8IP1 causes inhibition of JNK-regulated activity by retaining JNK in the cytoplasm and inhibiting JNK phosphorylation of c-Jun. May also participate in ApoER2-specific reelin signaling. Directly, or indirectly, regulates GLUT2 gene expression and beta-cell function. Appears to have a role in cell signaling in mature and developing nerve terminals. May function as a regulator of vesicle transport, through interactions with the JNK-signaling components and motor proteins. Functions as an anti-apoptotic protein and whose level seems to influence the beta-cell death or survival response. Acts as a scaffold protein that coordinates with SH3RF1 in organizing different components of the JNK pathway, including RAC1 or RAC2, MAP3K11/MLK3 or MAP3K7/TAK1, MAP2K7/MKK7, MAPK8/JNK1 and/or MAPK9/JNK2 into a functional multiprotein complex to ensure the effective activation of the JNK signaling pathway. Regulates the activation of MAPK8/JNK1 and differentiation of CD8(+) T-cells. The polypeptide is C-Jun-amino-terminal kinase-interacting protein 1 (MAPK8IP1) (Homo sapiens (Human)).